We begin with the raw amino-acid sequence, 411 residues long: Peptidase T (411 aa).

Residue His79 coordinates Zn(2+). Residue Asp81 is part of the active site. Residue Asp142 coordinates Zn(2+). The Proton acceptor role is filled by Glu176. 3 residues coordinate Zn(2+): Glu177, Asp199, and His381.

The protein belongs to the peptidase M20B family. Requires Zn(2+) as cofactor.

It localises to the cytoplasm. It catalyses the reaction Release of the N-terminal residue from a tripeptide.. Cleaves the N-terminal amino acid of tripeptides. This chain is Peptidase T, found in Geobacillus kaustophilus (strain HTA426).